The sequence spans 325 residues: Golgi to ER traffic protein 4 homolog A (325 aa).

Disordered stretches follow at residues M1 to Q22 and S306 to D325. A compositionally biased stretch (acidic residues) spans G307–E317.

It belongs to the GET4 family. As to quaternary structure, component of the bag6/bat3 complex.

It localises to the cytoplasm. Its subcellular location is the cytosol. As part of a cytosolic protein quality control complex, the bag6/bat3 complex, maintains misfolded and hydrophobic patches-containing proteins in a soluble state and participates in their proper delivery to the endoplasmic reticulum or alternatively can promote their sorting to the proteasome where they undergo degradation. The bag6/bat3 complex is involved in the post-translational delivery of tail-anchored/type II transmembrane proteins to the endoplasmic reticulum membrane. Similarly, the bag6/bat3 complex also functions as a sorting platform for proteins of the secretory pathway that are mislocalized to the cytosol either delivering them to the proteasome for degradation or to the endoplasmic reticulum. The bag6/bat3 complex also plays a role in the endoplasmic reticulum-associated degradation (ERAD), a quality control mechanism that eliminates unwanted proteins of the endoplasmic reticulum through their retrotranslocation to the cytosol and their targeting to the proteasome. It maintains these retrotranslocated proteins in an unfolded yet soluble state condition in the cytosol to ensure their proper delivery to the proteasome. The sequence is that of Golgi to ER traffic protein 4 homolog A (get4-a) from Xenopus laevis (African clawed frog).